The primary structure comprises 241 residues: Large ribosomal subunit protein uL30 (241 aa).

The disordered stretch occupies residues 1–32; the sequence is MATTLKPETLQKKEKAQQKTAEERAAAKKVRK. Residues 9–26 are compositionally biased toward basic and acidic residues; that stretch reads TLQKKEKAQQKTAEERAA.

This sequence belongs to the universal ribosomal protein uL30 family. In terms of assembly, component of the large ribosomal subunit. Mature ribosomes consist of a small (40S) and a large (60S) subunit. The 40S subunit contains about 32 different proteins and 1 molecule of RNA (18S). The 60S subunit contains 45 different proteins and 3 molecules of RNA (25S, 5.8S and 5S).

Its subcellular location is the cytoplasm. In terms of biological role, component of the ribosome, a large ribonucleoprotein complex responsible for the synthesis of proteins in the cell. The small ribosomal subunit (SSU) binds messenger RNAs (mRNAs) and translates the encoded message by selecting cognate aminoacyl-transfer RNA (tRNA) molecules. The large subunit (LSU) contains the ribosomal catalytic site termed the peptidyl transferase center (PTC), which catalyzes the formation of peptide bonds, thereby polymerizing the amino acids delivered by tRNAs into a polypeptide chain. The nascent polypeptides leave the ribosome through a tunnel in the LSU and interact with protein factors that function in enzymatic processing, targeting, and the membrane insertion of nascent chains at the exit of the ribosomal tunnel. This chain is Large ribosomal subunit protein uL30, found in Candida albicans (strain SC5314 / ATCC MYA-2876) (Yeast).